Reading from the N-terminus, the 898-residue chain is Pyruvate, phosphate dikinase (898 aa).

The tract at residues Met1 to Lys355 is N-terminal. Arg96 provides a ligand contact to ATP. Positions Arg356–Ser412 are linker 1. Residues Pro413–Ile511 are central. At Thr466 the chain carries Phosphothreonine; by PDRP1. His468 (tele-phosphohistidine intermediate) is an active-site residue. The segment at Asp512–Arg546 is linker 2. Positions Met547 to Ser898 are C-terminal. Arg574, Arg630, Glu758, Gly779, Thr780, Asn781, and Asp782 together coordinate substrate. Glu758 contributes to the Mg(2+) binding site. Asp782 provides a ligand contact to Mg(2+). The active-site Proton donor is Cys844.

It belongs to the PEP-utilizing enzyme family. In terms of assembly, homodimer. Mg(2+) is required as a cofactor. In terms of processing, phosphorylation of Thr-466 in the dark inactivates the enzyme. Dephosphorylation upon light stimulation reactivates the enzyme.

The catalysed reaction is pyruvate + phosphate + ATP = phosphoenolpyruvate + AMP + diphosphate + H(+). With respect to regulation, activated by light-induced dephosphorylation. Inhibited by dark-induced phosphorylation. Both reactions are catalyzed by PDRP1. In terms of biological role, catalyzes the reversible phosphorylation of pyruvate and phosphate. In Rhizobium meliloti (strain 1021) (Ensifer meliloti), this protein is Pyruvate, phosphate dikinase (ppdK).